An 85-amino-acid chain; its full sequence is Small ribosomal subunit protein bS18 (85 aa).

It belongs to the bacterial ribosomal protein bS18 family. Part of the 30S ribosomal subunit. Forms a tight heterodimer with protein bS6.

Its function is as follows. Binds as a heterodimer with protein bS6 to the central domain of the 16S rRNA, where it helps stabilize the platform of the 30S subunit. The sequence is that of Small ribosomal subunit protein bS18 from Solidesulfovibrio magneticus (strain ATCC 700980 / DSM 13731 / RS-1) (Desulfovibrio magneticus).